The primary structure comprises 88 residues: Apolipoprotein C-I (88 aa).

Positions 1–26 are cleaved as a signal peptide; it reads MRLFISLPILIVVLAMALEGPAPAQA.

Belongs to the apolipoprotein C1 family.

The protein localises to the secreted. Functionally, inhibitor of lipoprotein binding to the low density lipoprotein (LDL) receptor, LDL receptor-related protein, and very low density lipoprotein (VLDL) receptor. Associates with high density lipoproteins (HDL) and the triacylglycerol-rich lipoproteins in the plasma and makes up about 10% of the protein of the VLDL and 2% of that of HDL. Appears to interfere directly with fatty acid uptake and is also the major plasma inhibitor of cholesteryl ester transfer protein (CETP). Modulates the interaction of APOE with beta-migrating VLDL and inhibits binding of beta-VLDL to the LDL receptor-related protein. Binds free fatty acids and reduces their intracellular esterification. In Neotoma lepida (Desert woodrat), this protein is Apolipoprotein C-I (Apoc1).